The primary structure comprises 475 residues: Equilibrative nucleoside transporter 3 (475 aa).

Topologically, residues 1 to 51 (MAFASEDIAYHSSNAVYRVPSNRHEADQEALLGKPLDYPAPGLQRPEDRFN) are cytoplasmic. Position 21 is a phosphoserine (serine 21). A Dileucine internalization motif motif is present at residues 31 to 32 (LL). A helical transmembrane segment spans residues 52 to 72 (GAYIIFFCLGIGGLLPWNFFV). Residues 73 to 105 (TAKEYWAFKLRNCSSPASGKDPEDADILNYFES) lie on the Extracellular side of the membrane. Asparagine 84 carries N-linked (GlcNAc...) asparagine glycosylation. Residues 106–126 (YLAVASTVPSLLFLVANFLLV) form a helical membrane-spanning segment. Over 127–132 (NRIRVH) the chain is Cytoplasmic. A helical membrane pass occupies residues 133–153 (VRVLASLSVSLAIFVVMAVLV). Residues 154-162 (RVDTSSWTR) are Extracellular-facing. Residues 163-183 (GFFSIAMACMAIISSSSTIFN) form a helical membrane-spanning segment. The Cytoplasmic portion of the chain corresponds to 184–199 (SSVYGLTGSFPMRNAQ). A helical membrane pass occupies residues 200–220 (ALISGGAMGGTVSAVASLVDL). Residues 221 to 230 (AASSDVRDSA) lie on the Extracellular side of the membrane. Residues 231–251 (LAFFLTAAVFLGLCVGLYLLL) form a helical membrane-spanning segment. Over 252–305 (PQLEYARYYMRPVVPIHVFSSEDSPPRDAPSTSSVAPASRAVHTPPLGPILKKT) the chain is Cytoplasmic. The disordered stretch occupies residues 272 to 291 (SEDSPPRDAPSTSSVAPASR). A helical transmembrane segment spans residues 306–326 (AGLGFCAVFLYFITALIFPAI). At 327–340 (STNIQPMHKGTGSP) the chain is on the extracellular side. A helical transmembrane segment spans residues 341–361 (WTSKFYVPLTVFLLFNFADLC). Over 362-377 (GRQVTAWIQVPGPRSK) the chain is Cytoplasmic. The helical transmembrane segment at 378 to 398 (LLPILAVSRVCLVPLFLLCNY) threads the bilayer. The Extracellular portion of the chain corresponds to 399–414 (QPRSHLTLVLFQSDIY). Residues 415–437 (PILFTCLLGLSNGYLSTLVLMYG) form a helical membrane-spanning segment. Residues 438 to 450 (PKIVPRELAEATS) are Cytoplasmic-facing. The chain crosses the membrane as a helical span at residues 451-471 (VVMLFYMSLGLMLGSACAALL). Topologically, residues 472 to 475 (EHFI) are extracellular.

It belongs to the SLC29A/ENT transporter (TC 2.A.57) family. As to expression, widely expressed. Highest levels in heart and liver (at protein level).

It is found in the lysosome membrane. Its subcellular location is the late endosome membrane. The protein localises to the mitochondrion membrane. The protein resides in the cell membrane. It catalyses the reaction adenosine(in) = adenosine(out). The enzyme catalyses guanosine(in) = guanosine(out). It carries out the reaction inosine(in) = inosine(out). The catalysed reaction is uridine(out) = uridine(in). It catalyses the reaction cytidine(in) = cytidine(out). The enzyme catalyses thymidine(in) = thymidine(out). It carries out the reaction 2'-deoxyadenosine(in) = 2'-deoxyadenosine(out). The catalysed reaction is 2'-deoxycytidine(in) = 2'-deoxycytidine(out). It catalyses the reaction guanine(out) = guanine(in). The enzyme catalyses uracil(in) = uracil(out). It carries out the reaction (R)-noradrenaline(out) = (R)-noradrenaline(in). The catalysed reaction is dopamine(out) = dopamine(in). It catalyses the reaction serotonin(out) = serotonin(in). The enzyme catalyses tyramine(in) = tyramine(out). It carries out the reaction ATP(in) = ATP(out). Uniporter that mediates the facilitative transport of nucleoside across lysosomal and mitochondrial membranes. Functions as a non-electrogenic Na(+)-independent transporter. Substrate transport is pH-dependent and enhanced under acidic condition, probably reflecting the location of the transporter in acidic intracellular compartments. Proton is not a cotransporting ion but most likely change the ionization state of the transporter which dictates transport-permissible/impermissible conformation for nucleoside translocation. May direct the nucleoside transport from lysosomes to cytosol or cytosol to mitochondria to facilitate the fundamental function of salvage synthesis of nucleic acids. Involved in the transport of nucleosides (adenosine, guanosine, uridine, thymidine, cytidine and inosine) and deoxynucleosides (deoxyadenosine, deoxycytidine). Also mediates transport of purine nucleobases (adenine, guanine) and pyrimidine nucleobases (uracil). Also able to transport monoamine neurotransmitters dopamine, serotonin, noradrenaline and tyramine. Capable of transporting ATP. Mediates nucleoside export from lysosomes in macrophages, which regulates macrophage functions and numbers. The sequence is that of Equilibrative nucleoside transporter 3 from Rattus norvegicus (Rat).